The sequence spans 103 residues: Iron-sulfur cluster assembly protein CyaY (103 aa).

The protein belongs to the frataxin family.

In terms of biological role, involved in iron-sulfur (Fe-S) cluster assembly. May act as a regulator of Fe-S biogenesis. In Rickettsia peacockii (strain Rustic), this protein is Iron-sulfur cluster assembly protein CyaY.